The sequence spans 508 residues: Immunoglobulin G-binding protein A (508 aa).

The N-terminal stretch at 1–36 (MKKKNIYSIRKLGVGIASVTLGTLLISGGVTPAANA) is a signal peptide. The YSIRK-G/S signaling motif signature appears at 7-18 (YSIRKLGVGIAS). An Immunoglobulin-binding region E repeat occupies 37 to 92 (AQHDEAQQNAFYQVLNMPNLNADQRNGFIQSLKDDPSQSANVLGEAQKLNDSQAPK). One copy of the Immunoglobulin-binding region D repeat lies at 93-153 (ADAQQNNFNK…KKLNESQAPK (61 aa)). One copy of the Immunoglobulin-binding region A repeat lies at 154 to 211 (ADNNFNKEQQNAFYEILNMPNLNEEQRNGFIQSLKDDPSQSANLLSEAKKLNESQAPK). The stretch at 212–269 (ADNKFNKEQQNAFYEILHLPNLNEEQRNGFIQSLKDDPSQSANLLAEAKKLNDAQAPK) is one Immunoglobulin-binding region B repeat. The stretch at 270–327 (ADNKFNKEQQNAFYEILHLPNLTEEQRNGFIQSLKDDPSVSKEILAEAKKLNDAQAPK) is one Immunoglobulin-binding region C repeat. The span at 318–412 (KKLNDAQAPK…GNKPGKEDGN (95 aa)) shows a compositional bias: basic and acidic residues. Disordered regions lie at residues 318–421 (KKLN…KPGD) and 459–479 (KKQP…ETGE). 10 tandem repeats follow at residues 333–340 (KPGKEDNN), 341–348 (KPGKEDNN), 349–356 (KPGKEDNN), 357–364 (KPGKEDGN), 365–372 (KPGKEDNK), 373–380 (KPGKEDGN), 381–388 (KPGKEDNK), 389–396 (KPGKEDGN), 397–404 (KPGKEDGN), and 405–412 (KPGKEDGN). Residues 333 to 412 (KPGKEDNNKP…GNKPGKEDGN (80 aa)) are 10 X 8 AA approximate tandem repeats. A LysM domain is found at 413–457 (GVHVVKPGDTVNDIAKANGTTADKIAADNKLADKNMIKPGQELVV). The LPXTG sorting signal signature appears at 474–478 (LPETG). Residue Thr477 is modified to Pentaglycyl murein peptidoglycan amidated threonine. A propeptide spans 478–508 (GEENPFIGTTVFGGLSLALGAALLAGRRREL) (removed by sortase).

Belongs to the immunoglobulin-binding protein SpA family. As to quaternary structure, interacts with host TNFRSF1A; this interaction leads to the stimulation of both surface expression and shedding of TNFRSF1A.

Its subcellular location is the secreted. It is found in the cell wall. Functionally, plays a role in the inhibition of the host innate and adaptive immune responses. Possesses five immunoglobulin-binding domains that capture both the fragment crystallizable region (Fc region) and the Fab region (part of Ig that identifies antigen) of immunoglobulins. In turn, Staphylococcus aureus is protected from phagocytic killing via inhibition of Ig Fc region. In addition, the host elicited B-cell response is prevented due to a decrease of antibody-secreting cell proliferation that enter the bone marrow, thereby decreasing long-term antibody production. Inhibits osteogenesis by preventing osteoblast proliferation and expression of alkaline phosphatase, type I collagen, osteopontin and osteocalcin. Acts directly as a pro-inflammatory factor in the lung through its ability to bind and activate tumor necrosis factor alpha receptor 1/TNFRSF1A. The polypeptide is Immunoglobulin G-binding protein A (spa) (Staphylococcus aureus (strain Newman)).